A 69-amino-acid chain; its full sequence is Conotoxin Gla-TxXI (69 aa).

The first 25 residues, 1–25 (MVRVTSVGCFLLVIVSLNLVVLTNA), serve as a signal peptide directing secretion. Cystine bridges form between Cys26–Cys40, Cys33–Cys45, Cys39–Cys49, and Cys44–Cys53. Glu29 carries the 4-carboxyglutamate modification. Pro56 carries the proline amide modification. Positions 60-69 (AKLLEFFRQR) are excised as a propeptide.

Post-translationally, contains 4 disulfide bonds. In terms of tissue distribution, expressed by the venom duct.

It is found in the secreted. The polypeptide is Conotoxin Gla-TxXI (Conus textile (Cloth-of-gold cone)).